The sequence spans 483 residues: Probable cobyric acid synthase (483 aa).

In terms of domain architecture, GATase cobBQ-type spans Glu247–Phe433. Cys325 serves as the catalytic Nucleophile. His425 is an active-site residue.

The protein belongs to the CobB/CobQ family. CobQ subfamily.

It participates in cofactor biosynthesis; adenosylcobalamin biosynthesis. Its function is as follows. Catalyzes amidations at positions B, D, E, and G on adenosylcobyrinic A,C-diamide. NH(2) groups are provided by glutamine, and one molecule of ATP is hydrogenolyzed for each amidation. The polypeptide is Probable cobyric acid synthase (Thermococcus gammatolerans (strain DSM 15229 / JCM 11827 / EJ3)).